The following is a 409-amino-acid chain: bZIP transcription factor 16 (409 aa).

Residues 1–16 are compositionally biased toward basic and acidic residues; that stretch reads MASNEMEKSSKEKEPK. Disordered stretches follow at residues 1-63, 118-236, 274-327, and 362-409; these read MASN…VASS, NGMT…LPVS, MHGK…LRKQ, and TTEN…KDST. Residues 24 to 34 are compositionally biased toward low complexity; it reads APPSSQEPSSA. The segment covering 133–145 has biased composition (basic and acidic residues); that stretch reads GDAKQSEVKEKLP. The span at 152–178 shows a compositional bias: polar residues; it reads SLGSLNMITGKNNEPGKNSGASANGAY. Over residues 179-203 the composition is skewed to low complexity; that stretch reads SKSGESASDGSSEGSDGNSQNDSGS. Residues 216 to 228 are compositionally biased toward polar residues; sequence NGGSANGPQNGSA. In terms of domain architecture, bZIP spans 305–368; that stretch reads ELKRQRRKQS…EELTTENTSL (64 aa). Residues 307-323 carry the Bipartite nuclear localization signal motif; sequence KRQRRKQSNRESARRSR. Residues 307–326 form a basic motif region; that stretch reads KRQRRKQSNRESARRSRLRK. A compositionally biased stretch (basic and acidic residues) spans 314–327; it reads SNRESARRSRLRKQ. A leucine-zipper region spans residues 333 to 368; that stretch reads LAQRAEVLNEENTNLRAEINKLKSQCEELTTENTSL. A compositionally biased stretch (basic and acidic residues) spans 398–409; the sequence is AERKVDSYKDST.

Belongs to the bZIP family. As to quaternary structure, monomer, homodimer and heterodimers with BZIP68 and GBF1/BZIP41. Heterodimers with GBF2/BZIP54 and GBF3/BZIP55. Binds DNA as monomer and forms homo- and heterodimers. The monomeric form is redox regulated. Interacts with GIP1.

The protein localises to the nucleus. Transcriptional activator that binds to the G-box motif (5'-CACGTG-3') and other cis-acting elements with 5'-ACGT-3' core, such as Hex, C-box and as-1 motifs. Possesses high binding affinity to G-box, much lower affinity to Hex and C-box, and little affinity to as-1 element. G-box and G-box-like motifs are cis-acting elements defined in promoters of certain plant genes which are regulated by such diverse stimuli as light-induction or hormone control. Binds to the G-box motif 5'-CACGTG-3' of LHCB2.4 (At3g27690) promoter. May act as transcriptional repressor in light-regulated expression of LHCB2.4. Binds DNA as monomer. DNA-binding activity is redox-dependent. In Arabidopsis thaliana (Mouse-ear cress), this protein is bZIP transcription factor 16.